The chain runs to 453 residues: Allantoinase (453 aa).

Zn(2+) contacts are provided by histidine 59, histidine 61, lysine 146, histidine 186, histidine 242, and aspartate 315. Lysine 146 is modified (N6-carboxylysine).

It belongs to the metallo-dependent hydrolases superfamily. Allantoinase family. Homotetramer. The cofactor is Zn(2+). In terms of processing, carboxylation allows a single lysine to coordinate two zinc ions.

The catalysed reaction is (S)-allantoin + H2O = allantoate + H(+). It functions in the pathway nitrogen metabolism; (S)-allantoin degradation; allantoate from (S)-allantoin: step 1/1. Functionally, catalyzes the conversion of allantoin (5-ureidohydantoin) to allantoic acid by hydrolytic cleavage of the five-member hydantoin ring. This chain is Allantoinase, found in Escherichia coli O9:H4 (strain HS).